A 233-amino-acid polypeptide reads, in one-letter code: uncharacterized protein (233 aa).

Belongs to the asfivirus H233R family.

This is an uncharacterized protein from African swine fever virus (strain Badajoz 1971 Vero-adapted) (Ba71V).